A 221-amino-acid chain; its full sequence is Succinate--CoA ligase [ADP-forming] subunit beta, mitochondrial (221 aa).

One can recognise an ATP-grasp domain in the interval 1–122 (DVVIKAQVLA…DSNSAYRQKI (122 aa)). Lys5 serves as a coordination point for ATP. 2 positions are modified to N6-acetyllysine: Lys22 and Lys26. A Phosphoserine modification is found at Ser114. The residue at position 139 (Thr139) is a Phosphothreonine. 171–173 (GIM) serves as a coordination point for substrate. Lys196 is modified (N6-acetyllysine).

This sequence belongs to the succinate/malate CoA ligase beta subunit family. ATP-specific subunit beta subfamily. As to quaternary structure, heterodimer of an alpha and a beta subunit. The beta subunit determines specificity for ATP. Interacts with ALAS2.

The protein localises to the mitochondrion. It carries out the reaction succinate + ATP + CoA = succinyl-CoA + ADP + phosphate. Its pathway is carbohydrate metabolism; tricarboxylic acid cycle; succinate from succinyl-CoA (ligase route): step 1/1. In terms of biological role, ATP-specific succinyl-CoA synthetase functions in the citric acid cycle (TCA), coupling the hydrolysis of succinyl-CoA to the synthesis of ATP and thus represents the only step of substrate-level phosphorylation in the TCA. The beta subunit provides nucleotide specificity of the enzyme and binds the substrate succinate, while the binding sites for coenzyme A and phosphate are found in the alpha subunit. The protein is Succinate--CoA ligase [ADP-forming] subunit beta, mitochondrial of Mesocricetus auratus (Golden hamster).